The sequence spans 308 residues: Cyclin-D4-1 (308 aa).

It belongs to the cyclin family. Cyclin D subfamily. As to quaternary structure, interacts with CDKA-1, CDKB2-1, KRP4/ICK7, KRP5/ICK3, KRP6/ICK4 and KRP7/ICK5. In terms of tissue distribution, expressed in shoot apical meristem, leaf primordia vascular tissues and tapetum of anthers.

May activate cell cycle in the root apical meristem (RAM) and promote embryonic root (radicle) protrusion. This is Cyclin-D4-1 (CYCD4-1) from Arabidopsis thaliana (Mouse-ear cress).